Here is a 75-residue protein sequence, read N- to C-terminus: Probable [Fe-S]-dependent transcriptional repressor (75 aa).

4 residues coordinate iron-sulfur cluster: Cys-55, Cys-60, Cys-63, and Cys-72.

The protein belongs to the FeoC family.

Its function is as follows. May function as a transcriptional regulator that controls feoABC expression. This is Probable [Fe-S]-dependent transcriptional repressor from Serratia marcescens.